The sequence spans 130 residues: HTH-type transcriptional repressor YtrA (130 aa).

Residues 10–78 (TPIYEQIIQQ…RGRGTYISEN (69 aa)) enclose the HTH gntR-type domain. The segment at residues 38–57 (VRELATIIIANPNTVSKAYK) is a DNA-binding region (H-T-H motif).

In terms of biological role, negatively regulates ABC transporter complex ytrBCDEF that plays a role in acetoin utilization during stationary phase and sporulation. In Bacillus subtilis (strain 168), this protein is HTH-type transcriptional repressor YtrA (ytrA).